The primary structure comprises 357 residues: Homoserine O-succinyltransferase (357 aa).

The active-site Acyl-thioester intermediate is C146. Positions 167 and 196 each coordinate substrate. Residue H239 is the Proton acceptor of the active site. E241 is a catalytic residue. Residue R253 participates in substrate binding.

This sequence belongs to the MetA family.

The protein localises to the cytoplasm. It catalyses the reaction L-homoserine + succinyl-CoA = O-succinyl-L-homoserine + CoA. Its pathway is amino-acid biosynthesis; L-methionine biosynthesis via de novo pathway; O-succinyl-L-homoserine from L-homoserine: step 1/1. Functionally, transfers a succinyl group from succinyl-CoA to L-homoserine, forming succinyl-L-homoserine. The protein is Homoserine O-succinyltransferase of Allochromatium vinosum (strain ATCC 17899 / DSM 180 / NBRC 103801 / NCIMB 10441 / D) (Chromatium vinosum).